The primary structure comprises 355 residues: UDP-N-acetylglucosamine--N-acetylmuramyl-(pentapeptide) pyrophosphoryl-undecaprenol N-acetylglucosamine transferase (355 aa).

Residues 15-17, Asn127, Arg163, Ser191, Ile244, 263-268, and Gln288 contribute to the UDP-N-acetyl-alpha-D-glucosamine site; these read TGG and ALTVSE.

Belongs to the glycosyltransferase 28 family. MurG subfamily.

The protein localises to the cell inner membrane. The catalysed reaction is di-trans,octa-cis-undecaprenyl diphospho-N-acetyl-alpha-D-muramoyl-L-alanyl-D-glutamyl-meso-2,6-diaminopimeloyl-D-alanyl-D-alanine + UDP-N-acetyl-alpha-D-glucosamine = di-trans,octa-cis-undecaprenyl diphospho-[N-acetyl-alpha-D-glucosaminyl-(1-&gt;4)]-N-acetyl-alpha-D-muramoyl-L-alanyl-D-glutamyl-meso-2,6-diaminopimeloyl-D-alanyl-D-alanine + UDP + H(+). It participates in cell wall biogenesis; peptidoglycan biosynthesis. Functionally, cell wall formation. Catalyzes the transfer of a GlcNAc subunit on undecaprenyl-pyrophosphoryl-MurNAc-pentapeptide (lipid intermediate I) to form undecaprenyl-pyrophosphoryl-MurNAc-(pentapeptide)GlcNAc (lipid intermediate II). This is UDP-N-acetylglucosamine--N-acetylmuramyl-(pentapeptide) pyrophosphoryl-undecaprenol N-acetylglucosamine transferase from Shigella boydii serotype 18 (strain CDC 3083-94 / BS512).